The following is a 273-amino-acid chain: Large ribosomal subunit protein uL2c (273 aa).

It belongs to the universal ribosomal protein uL2 family. Part of the 50S ribosomal subunit.

It is found in the plastid. Its subcellular location is the apicoplast. The protein is Large ribosomal subunit protein uL2c (rpl2) of Eimeria tenella (Coccidian parasite).